Consider the following 209-residue polypeptide: Ubiquitin-conjugating enzyme E2 S (209 aa).

The region spanning glutamine 14 to glutamine 160 is the UBC core domain. The active-site Glycyl thioester intermediate is the cysteine 98. Positions alanine 162 to leucine 209 are disordered. The segment covering histidine 169–leucine 199 has biased composition (basic and acidic residues). A compositionally biased stretch (basic residues) spans lysine 200 to leucine 209.

It belongs to the ubiquitin-conjugating enzyme family.

It carries out the reaction S-ubiquitinyl-[E1 ubiquitin-activating enzyme]-L-cysteine + [E2 ubiquitin-conjugating enzyme]-L-cysteine = [E1 ubiquitin-activating enzyme]-L-cysteine + S-ubiquitinyl-[E2 ubiquitin-conjugating enzyme]-L-cysteine.. Its pathway is protein modification; protein ubiquitination. Catalyzes the covalent attachment of ubiquitin to other proteins. Acts as an essential factor of the anaphase promoting complex/cyclosome (APC/C), a cell cycle-regulated ubiquitin ligase that controls progression through mitosis. Acts by specifically elongating polyubiquitin chains initiated by the E2 enzyme vih/UbcH10 on APC/C substrates, enhancing the degradation of APC/C substrates by the proteasome and promoting mitotic exit. This Drosophila erecta (Fruit fly) protein is Ubiquitin-conjugating enzyme E2 S.